A 211-amino-acid chain; its full sequence is Ethylene-responsive transcription factor LEP (211 aa).

2 disordered regions span residues 1–21 (MNTTSSKSKKKQDDQVGTRFL) and 74–110 (NFVYSDMPPSSSVTSIVSPDDPPPPPPPPAPPSNDPV). The segment at residues 19–76 (RFLGVRRRPWGRYAAEIRDPTTKERHWLGTFDTAEEAALAYDRAARSMRGTRARTNFV) is a DNA-binding region (AP2/ERF). Residues 81 to 92 (PPSSSVTSIVSP) show a composition bias toward low complexity. The span at 93 to 107 (DDPPPPPPPPAPPSN) shows a compositional bias: pro residues.

This sequence belongs to the AP2/ERF transcription factor family. ERF subfamily. Expressed in germinating seeds. Present in young shoots, at low levels, especially in leaf primordia and developing leaf blades. Also detected in vascular tissue, mostly in xylem, of young leaves, petioles and hypocotyls.

It localises to the nucleus. In terms of biological role, cell division-promoting factor involved in leaf blade differentiation, inflorescence branching, as well as in carpel and silique shape. Promotes the number of xylem cells. Positively regulates the gibberellin signaling pathway leading to germination, hypocotyl elongation, and leaf expansion. Probably acts as a transcriptional activator. Binds to the GCC-box pathogenesis-related promoter element. May be involved in the regulation of gene expression by stress factors and by components of stress signal transduction pathways. This Arabidopsis thaliana (Mouse-ear cress) protein is Ethylene-responsive transcription factor LEP (LEP).